We begin with the raw amino-acid sequence, 83 residues long: Cytochrome b559 subunit alpha (83 aa).

The helical transmembrane segment at 21-35 (VIHSITIPSLFIAGW) threads the bilayer. A heme-binding site is contributed by His23.

It belongs to the PsbE/PsbF family. As to quaternary structure, heterodimer of an alpha subunit and a beta subunit. PSII is composed of 1 copy each of membrane proteins PsbA, PsbB, PsbC, PsbD, PsbE, PsbF, PsbH, PsbI, PsbJ, PsbK, PsbL, PsbM, PsbT, PsbX, PsbY, PsbZ, Psb30/Ycf12, at least 3 peripheral proteins of the oxygen-evolving complex and a large number of cofactors. It forms dimeric complexes. Heme b is required as a cofactor.

The protein localises to the plastid. Its subcellular location is the chloroplast thylakoid membrane. This b-type cytochrome is tightly associated with the reaction center of photosystem II (PSII). PSII is a light-driven water:plastoquinone oxidoreductase that uses light energy to abstract electrons from H(2)O, generating O(2) and a proton gradient subsequently used for ATP formation. It consists of a core antenna complex that captures photons, and an electron transfer chain that converts photonic excitation into a charge separation. This is Cytochrome b559 subunit alpha from Adiantum capillus-veneris (Maidenhair fern).